Reading from the N-terminus, the 241-residue chain is Purine nucleoside phosphorylase DeoD-type (241 aa).

Position 5 (His5) interacts with a purine D-ribonucleoside. Residues Gly21, Arg25, Arg44, and Arg88–Ser91 contribute to the phosphate site. Residues Glu180–Glu182 and Ser204–Asp205 each bind a purine D-ribonucleoside. Catalysis depends on Asp205, which acts as the Proton donor.

It belongs to the PNP/UDP phosphorylase family. In terms of assembly, homohexamer; trimer of homodimers.

The catalysed reaction is a purine D-ribonucleoside + phosphate = a purine nucleobase + alpha-D-ribose 1-phosphate. It catalyses the reaction a purine 2'-deoxy-D-ribonucleoside + phosphate = a purine nucleobase + 2-deoxy-alpha-D-ribose 1-phosphate. Catalyzes the reversible phosphorolytic breakdown of the N-glycosidic bond in the beta-(deoxy)ribonucleoside molecules, with the formation of the corresponding free purine bases and pentose-1-phosphate. The sequence is that of Purine nucleoside phosphorylase DeoD-type from Yersinia enterocolitica serotype O:8 / biotype 1B (strain NCTC 13174 / 8081).